A 251-amino-acid polypeptide reads, in one-letter code: Ubiquinone/menaquinone biosynthesis C-methyltransferase UbiE (251 aa).

Residues Thr74, Asp95, 123-124 (NA), and Ser140 each bind S-adenosyl-L-methionine.

This sequence belongs to the class I-like SAM-binding methyltransferase superfamily. MenG/UbiE family.

It carries out the reaction a 2-demethylmenaquinol + S-adenosyl-L-methionine = a menaquinol + S-adenosyl-L-homocysteine + H(+). The catalysed reaction is a 2-methoxy-6-(all-trans-polyprenyl)benzene-1,4-diol + S-adenosyl-L-methionine = a 5-methoxy-2-methyl-3-(all-trans-polyprenyl)benzene-1,4-diol + S-adenosyl-L-homocysteine + H(+). Its pathway is quinol/quinone metabolism; menaquinone biosynthesis; menaquinol from 1,4-dihydroxy-2-naphthoate: step 2/2. It functions in the pathway cofactor biosynthesis; ubiquinone biosynthesis. Its function is as follows. Methyltransferase required for the conversion of demethylmenaquinol (DMKH2) to menaquinol (MKH2) and the conversion of 2-polyprenyl-6-methoxy-1,4-benzoquinol (DDMQH2) to 2-polyprenyl-3-methyl-6-methoxy-1,4-benzoquinol (DMQH2). The sequence is that of Ubiquinone/menaquinone biosynthesis C-methyltransferase UbiE from Klebsiella pneumoniae subsp. pneumoniae (strain ATCC 700721 / MGH 78578).